Here is a 77-residue protein sequence, read N- to C-terminus: Translation initiation factor IF-1, chloroplastic (77 aa).

The 71-residue stretch at M1–R71 folds into the S1-like domain.

The protein belongs to the IF-1 family. As to quaternary structure, component of the 30S ribosomal translation pre-initiation complex which assembles on the 30S ribosome in the order IF-2 and IF-3, IF-1 and N-formylmethionyl-tRNA(fMet); mRNA recruitment can occur at any time during PIC assembly.

It localises to the plastid. It is found in the chloroplast. Its function is as follows. One of the essential components for the initiation of protein synthesis. Stabilizes the binding of IF-2 and IF-3 on the 30S subunit to which N-formylmethionyl-tRNA(fMet) subsequently binds. Helps modulate mRNA selection, yielding the 30S pre-initiation complex (PIC). Upon addition of the 50S ribosomal subunit IF-1, IF-2 and IF-3 are released leaving the mature 70S translation initiation complex. The chain is Translation initiation factor IF-1, chloroplastic from Asarum canadense (Wild ginger).